A 64-amino-acid polypeptide reads, in one-letter code: Small ribosomal subunit protein bS21 (64 aa).

A disordered region spans residues 26–64; the sequence is DGILSEARRRTRFERPPTRRKRKDAAKRRLAIKAARKAT. A compositionally biased stretch (basic residues) spans 43–64; sequence TRRKRKDAAKRRLAIKAARKAT.

It belongs to the bacterial ribosomal protein bS21 family.

The protein is Small ribosomal subunit protein bS21 of Dehalococcoides mccartyi (strain ATCC BAA-2100 / JCM 16839 / KCTC 5957 / BAV1).